Reading from the N-terminus, the 424-residue chain is N-succinylarginine dihydrolase (424 aa).

Substrate-binding positions include 19–28 (AGLSPGNIAS), Asn-110, and 137–138 (HR). Glu-174 is an active-site residue. Position 207 (Arg-207) interacts with substrate. His-240 is an active-site residue. Substrate contacts are provided by Asp-242 and Asn-349. The Nucleophile role is filled by Cys-355.

It belongs to the succinylarginine dihydrolase family. In terms of assembly, homodimer.

It carries out the reaction N(2)-succinyl-L-arginine + 2 H2O + 2 H(+) = N(2)-succinyl-L-ornithine + 2 NH4(+) + CO2. It functions in the pathway amino-acid degradation; L-arginine degradation via AST pathway; L-glutamate and succinate from L-arginine: step 2/5. Catalyzes the hydrolysis of N(2)-succinylarginine into N(2)-succinylornithine, ammonia and CO(2). This is N-succinylarginine dihydrolase from Rhizorhabdus wittichii (strain DSM 6014 / CCUG 31198 / JCM 15750 / NBRC 105917 / EY 4224 / RW1) (Sphingomonas wittichii).